Consider the following 364-residue polypeptide: Probable methyltransferase ICS2 (364 aa).

Residues Tyr-18, Cys-61, Asp-98, Leu-99, Ser-133, and Phe-134 each coordinate S-adenosyl-L-homocysteine. Positions 172, 258, 260, and 261 each coordinate Mg(2+).

The protein belongs to the methyltransferase superfamily. Type-7 methyltransferase family. Mg(2+) is required as a cofactor.

Functionally, no detectable N-methyltransferase activity. The chain is Probable methyltransferase ICS2 from Camellia irrawadiensis (Burmese tea).